The chain runs to 197 residues: dITP/XTP pyrophosphatase (197 aa).

Position 8-13 (8-13 (TGNPGK)) interacts with substrate. Mg(2+) is bound by residues Glu-40 and Asp-69. The Proton acceptor role is filled by Asp-69. Residues Ser-70, 154 to 157 (FGYD), Lys-177, and 182 to 183 (HR) each bind substrate.

It belongs to the HAM1 NTPase family. In terms of assembly, homodimer. Mg(2+) serves as cofactor.

The enzyme catalyses XTP + H2O = XMP + diphosphate + H(+). The catalysed reaction is dITP + H2O = dIMP + diphosphate + H(+). It catalyses the reaction ITP + H2O = IMP + diphosphate + H(+). Pyrophosphatase that catalyzes the hydrolysis of nucleoside triphosphates to their monophosphate derivatives, with a high preference for the non-canonical purine nucleotides XTP (xanthosine triphosphate), dITP (deoxyinosine triphosphate) and ITP. Seems to function as a house-cleaning enzyme that removes non-canonical purine nucleotides from the nucleotide pool, thus preventing their incorporation into DNA/RNA and avoiding chromosomal lesions. This chain is dITP/XTP pyrophosphatase, found in Yersinia pseudotuberculosis serotype I (strain IP32953).